We begin with the raw amino-acid sequence, 145 residues long: 3-dehydroquinate dehydratase (145 aa).

Tyrosine 23 serves as the catalytic Proton acceptor. Substrate contacts are provided by asparagine 75, histidine 81, and aspartate 88. The active-site Proton donor is the histidine 101. Residues 102–103 and arginine 112 each bind substrate; that span reads IS.

The protein belongs to the type-II 3-dehydroquinase family. In terms of assembly, homododecamer.

It catalyses the reaction 3-dehydroquinate = 3-dehydroshikimate + H2O. It participates in metabolic intermediate biosynthesis; chorismate biosynthesis; chorismate from D-erythrose 4-phosphate and phosphoenolpyruvate: step 3/7. Functionally, catalyzes a trans-dehydration via an enolate intermediate. The polypeptide is 3-dehydroquinate dehydratase (Caldicellulosiruptor bescii (strain ATCC BAA-1888 / DSM 6725 / KCTC 15123 / Z-1320) (Anaerocellum thermophilum)).